A 343-amino-acid chain; its full sequence is MTITPQEALQRTIEHREIFHDEMLHLMRLIMRGDMSPVMAAAIITGLRVKKETIGEIAAAATVMREFANHVEVQDNSNFVDIVGTGGDGSHTFNISTASMFVTAAAGAKVAKHGNRGVSSKSGSADVLEALGVNIDLQPDQVAASIAETGMGFMFAPNHHPAMKNIAAVRRELGVRTIFNILGPLTNPAGAPNQLMGVFHPDLVGIQVRVMQRLGAQHVLVVYGKDGMDEVSLGAATLVGELRDGQVHEYEIHPEDFGLQMVSNRTLKVENAEESRAMLLGALDNQPGVAREIVTLNAGTALYAANVAGSIADGIQLAREAIASGKARAKVDELVRFTQQFKR.

5-phospho-alpha-D-ribose 1-diphosphate-binding positions include glycine 84, 87-88 (GD), threonine 92, 94-97 (NIST), 112-120 (KHGNRGVSS), and serine 124. Glycine 84 provides a ligand contact to anthranilate. Serine 96 serves as a coordination point for Mg(2+). Asparagine 115 provides a ligand contact to anthranilate. Anthranilate is bound at residue arginine 170. 2 residues coordinate Mg(2+): aspartate 229 and glutamate 230.

It belongs to the anthranilate phosphoribosyltransferase family. As to quaternary structure, homodimer. Mg(2+) is required as a cofactor.

It catalyses the reaction N-(5-phospho-beta-D-ribosyl)anthranilate + diphosphate = 5-phospho-alpha-D-ribose 1-diphosphate + anthranilate. It functions in the pathway amino-acid biosynthesis; L-tryptophan biosynthesis; L-tryptophan from chorismate: step 2/5. Its function is as follows. Catalyzes the transfer of the phosphoribosyl group of 5-phosphorylribose-1-pyrophosphate (PRPP) to anthranilate to yield N-(5'-phosphoribosyl)-anthranilate (PRA). This Burkholderia multivorans (strain ATCC 17616 / 249) protein is Anthranilate phosphoribosyltransferase.